Reading from the N-terminus, the 1057-residue chain is Exportin-1 (1057 aa).

Residues 36–102 enclose the Importin N-terminal domain; it reads AQMVLGKFQE…KNYIVSLIIR (67 aa). HEAT repeat units follow at residues 239–275, 281–321, 462–501, 506–544, 551–588, 596–633, 739–776, 781–818, 855–892, 902–925, and 926–965; these read AEPSKLVKLLLHKYFPEPLFRNSTLKCLTEIGNLNLG, AVFI…FIHT, NTQHIMLEKLQTLISGREFTFQRLNTLCWAIGSISGAQNK, RFLVTVIKDLLELCQNKKGKDNKAVIASDIMYIVGQYPR, KFLKTVVNKLFEFMHESHPGVQDMACDTFLKISKQCKR, EESQPFINELLNQLSTTIAHLEQSQIHTFYEAVGYMIA, KETLKLLETFIEKSSDKQVIYSNFLQPLLEAVLGDYRT, TRDPEVLSLMTAIITSLKQLVHPEVPKILEAVFETTLS, QQFKLLIDCVVWAFKHTERNISETGLHILKELIENVSK, KTYLVSLLNDILYILTDSFHKSGF, and ALECDILRMMFQVVENGVVKIPLFDPQQANFPSNSEYVKE.

Belongs to the exportin family. Component of a nuclear export receptor complex.

It localises to the nucleus. The protein resides in the cytoplasm. It is found in the perinuclear region. Its function is as follows. Mediates the nuclear export of cellular proteins (cargos) bearing a leucine-rich nuclear export signal (NES). The sequence is that of Exportin-1 (xpo1) from Dictyostelium discoideum (Social amoeba).